The primary structure comprises 127 residues: Glycine cleavage system H protein (127 aa).

The region spanning 22 to 104 (KVRIGITHFA…YEKAWMIVVE (83 aa)) is the Lipoyl-binding domain. Lys63 is subject to N6-lipoyllysine.

It belongs to the GcvH family. In terms of assembly, the glycine cleavage system is composed of four proteins: P, T, L and H. (R)-lipoate is required as a cofactor.

Its function is as follows. The glycine cleavage system catalyzes the degradation of glycine. The H protein shuttles the methylamine group of glycine from the P protein to the T protein. Is also involved in protein lipoylation via its role as an octanoyl/lipoyl carrier protein intermediate. This chain is Glycine cleavage system H protein, found in Bacillus pumilus (strain SAFR-032).